Here is a 359-residue protein sequence, read N- to C-terminus: 3-isopropylmalate dehydrogenase (359 aa).

77–88 (GPKWGTGDVRPE) provides a ligand contact to NAD(+). The substrate site is built by R95, R105, R134, and D223. Mg(2+) contacts are provided by D223, D248, and D252. Residue 287-298 (GSAPDLPAGKVN) coordinates NAD(+).

This sequence belongs to the isocitrate and isopropylmalate dehydrogenases family. In terms of assembly, homodimer. It depends on Mg(2+) as a cofactor. Requires Mn(2+) as cofactor.

It localises to the cytoplasm. The catalysed reaction is (2R,3S)-3-isopropylmalate + NAD(+) = 4-methyl-2-oxopentanoate + CO2 + NADH. Its pathway is amino-acid biosynthesis; L-leucine biosynthesis; L-leucine from 3-methyl-2-oxobutanoate: step 3/4. Catalyzes the oxidation of 3-carboxy-2-hydroxy-4-methylpentanoate (3-isopropylmalate) to 3-carboxy-4-methyl-2-oxopentanoate. The product decarboxylates to 4-methyl-2 oxopentanoate. The protein is 3-isopropylmalate dehydrogenase (LEU2) of Diutina rugosa (Yeast).